Here is a 101-residue protein sequence, read N- to C-terminus: Small ribosomal subunit protein uS14 (101 aa).

It belongs to the universal ribosomal protein uS14 family. In terms of assembly, part of the 30S ribosomal subunit. Contacts proteins S3 and S10.

Its function is as follows. Binds 16S rRNA, required for the assembly of 30S particles and may also be responsible for determining the conformation of the 16S rRNA at the A site. The polypeptide is Small ribosomal subunit protein uS14 (Erythrobacter litoralis (strain HTCC2594)).